Here is a 285-residue protein sequence, read N- to C-terminus: Ribosomal RNA large subunit methyltransferase F (285 aa).

It belongs to the methyltransferase superfamily. METTL16/RlmF family.

The protein resides in the cytoplasm. The enzyme catalyses adenosine(1618) in 23S rRNA + S-adenosyl-L-methionine = N(6)-methyladenosine(1618) in 23S rRNA + S-adenosyl-L-homocysteine + H(+). Its function is as follows. Specifically methylates the adenine in position 1618 of 23S rRNA. This Christiangramia forsetii (strain DSM 17595 / CGMCC 1.15422 / KT0803) (Gramella forsetii) protein is Ribosomal RNA large subunit methyltransferase F.